The following is a 373-amino-acid chain: DNA replication and repair protein RecF (373 aa).

30-37 (GENAQGKT) is an ATP binding site.

Belongs to the RecF family.

The protein localises to the cytoplasm. In terms of biological role, the RecF protein is involved in DNA metabolism; it is required for DNA replication and normal SOS inducibility. RecF binds preferentially to single-stranded, linear DNA. It also seems to bind ATP. This chain is DNA replication and repair protein RecF, found in Bacillus cytotoxicus (strain DSM 22905 / CIP 110041 / 391-98 / NVH 391-98).